Here is a 156-residue protein sequence, read N- to C-terminus: Small ribosomal subunit protein uS7 (156 aa).

It belongs to the universal ribosomal protein uS7 family. In terms of assembly, part of the 30S ribosomal subunit. Contacts proteins S9 and S11.

Its function is as follows. One of the primary rRNA binding proteins, it binds directly to 16S rRNA where it nucleates assembly of the head domain of the 30S subunit. Is located at the subunit interface close to the decoding center, probably blocks exit of the E-site tRNA. This chain is Small ribosomal subunit protein uS7, found in Leuconostoc mesenteroides subsp. mesenteroides (strain ATCC 8293 / DSM 20343 / BCRC 11652 / CCM 1803 / JCM 6124 / NCDO 523 / NBRC 100496 / NCIMB 8023 / NCTC 12954 / NRRL B-1118 / 37Y).